Consider the following 71-residue polypeptide: Conotoxin Vc6.12 (71 aa).

The first 19 residues, 1-19, serve as a signal peptide directing secretion; sequence MQKLIILLLVAAVLMSTQA. Residues 20–43 constitute a propeptide that is removed on maturation; it reads LFQEKRPMKKINFLSKGKTDAEKQ. 3 disulfides stabilise this stretch: Cys48–Cys62, Cys55–Cys66, and Cys61–Cys70.

Belongs to the conotoxin O2 superfamily. In terms of tissue distribution, expressed by the venom duct.

It localises to the secreted. Its function is as follows. Inhibits voltage-gated ion channels. This Conus victoriae (Queen Victoria cone) protein is Conotoxin Vc6.12.